Consider the following 308-residue polypeptide: Tetraacyldisaccharide 4'-kinase (308 aa).

Position 63 to 70 (63 to 70 (SFGGNGKT)) interacts with ATP.

Belongs to the LpxK family.

It catalyses the reaction a lipid A disaccharide + ATP = a lipid IVA + ADP + H(+). The protein operates within glycolipid biosynthesis; lipid IV(A) biosynthesis; lipid IV(A) from (3R)-3-hydroxytetradecanoyl-[acyl-carrier-protein] and UDP-N-acetyl-alpha-D-glucosamine: step 6/6. Functionally, transfers the gamma-phosphate of ATP to the 4'-position of a tetraacyldisaccharide 1-phosphate intermediate (termed DS-1-P) to form tetraacyldisaccharide 1,4'-bis-phosphate (lipid IVA). The polypeptide is Tetraacyldisaccharide 4'-kinase (Campylobacter jejuni subsp. jejuni serotype O:2 (strain ATCC 700819 / NCTC 11168)).